Reading from the N-terminus, the 194-residue chain is Large ribosomal subunit protein uL5 (194 aa).

Belongs to the universal ribosomal protein uL5 family. In terms of assembly, part of the 50S ribosomal subunit; part of the 5S rRNA/L5/L18/L25 subcomplex. Contacts the 5S rRNA and the P site tRNA. Forms a bridge to the 30S subunit in the 70S ribosome.

Its function is as follows. This is one of the proteins that bind and probably mediate the attachment of the 5S RNA into the large ribosomal subunit, where it forms part of the central protuberance. In the 70S ribosome it contacts protein S13 of the 30S subunit (bridge B1b), connecting the 2 subunits; this bridge is implicated in subunit movement. Contacts the P site tRNA; the 5S rRNA and some of its associated proteins might help stabilize positioning of ribosome-bound tRNAs. The chain is Large ribosomal subunit protein uL5 from Frankia alni (strain DSM 45986 / CECT 9034 / ACN14a).